Reading from the N-terminus, the 732-residue chain is Elongation factor 2 (732 aa).

Residues Glu19 to Thr230 form the tr-type G domain. GTP contacts are provided by residues Ala28–Thr35, Asp94–His98, and Asn148–Asp151. His597 is subject to Diphthamide.

The protein belongs to the TRAFAC class translation factor GTPase superfamily. Classic translation factor GTPase family. EF-G/EF-2 subfamily.

The protein resides in the cytoplasm. Catalyzes the GTP-dependent ribosomal translocation step during translation elongation. During this step, the ribosome changes from the pre-translocational (PRE) to the post-translocational (POST) state as the newly formed A-site-bound peptidyl-tRNA and P-site-bound deacylated tRNA move to the P and E sites, respectively. Catalyzes the coordinated movement of the two tRNA molecules, the mRNA and conformational changes in the ribosome. The chain is Elongation factor 2 from Thermococcus gammatolerans (strain DSM 15229 / JCM 11827 / EJ3).